The sequence spans 517 residues: MAPIALLSVSNKHGIVPLAESLHRMHGFQLLSSGGTAKVLEDAGLPVTRVAEHTGAAEILGGRVKTLHPRVHGGILAMRGDPDHEVDLEQHQIPPIDVVVVNLYPFRETVANPQVSWETAIENIDIGGPAMVRAAAKNHAHVAVLTRPDQYDRFLVALSDGVDDQLRRELALEAFEHTAAYDVAISHWMGERLTEQASQWLEAIPLRQRLRYGENPHQHAAWYSAPQQGWGGAIQLQGKELSTNNLLDLEAALATVREFGYGTEGAQQAVQDAAVVVKHTNPCGVAIGTGVASALSRALDADRVSAFGGIVALNGLVDATTARELTSLFLECVVAPGFEPEAREILATKANLRLLELAPGAIDAAGRDHIRTILGGVLVQDQDDQSIDPTSWTVASKRSPNAEENADLTFAWRLVRHVRSNAIVVARAGQSLGVGAGQMNRVGSARLALEAAGDQARGAVLASDGFFPFDDTVRLAANHGICAVIQPGGSKRDADSIAVCDDFGLAMVLTGKRHFLH.

In terms of domain architecture, MGS-like spans Met1–Thr146.

This sequence belongs to the PurH family.

It carries out the reaction (6R)-10-formyltetrahydrofolate + 5-amino-1-(5-phospho-beta-D-ribosyl)imidazole-4-carboxamide = 5-formamido-1-(5-phospho-D-ribosyl)imidazole-4-carboxamide + (6S)-5,6,7,8-tetrahydrofolate. The enzyme catalyses IMP + H2O = 5-formamido-1-(5-phospho-D-ribosyl)imidazole-4-carboxamide. The protein operates within purine metabolism; IMP biosynthesis via de novo pathway; 5-formamido-1-(5-phospho-D-ribosyl)imidazole-4-carboxamide from 5-amino-1-(5-phospho-D-ribosyl)imidazole-4-carboxamide (10-formyl THF route): step 1/1. It participates in purine metabolism; IMP biosynthesis via de novo pathway; IMP from 5-formamido-1-(5-phospho-D-ribosyl)imidazole-4-carboxamide: step 1/1. This chain is Bifunctional purine biosynthesis protein PurH, found in Prochlorococcus marinus (strain MIT 9313).